An 817-amino-acid chain; its full sequence is Cargo-transport protein YPP1 (817 aa).

This sequence belongs to the YPP1 family. As to quaternary structure, interacts with ribosomes.

It localises to the cytoplasmic granule. Its subcellular location is the cell membrane. Functionally, involved in endocytosis. The sequence is that of Cargo-transport protein YPP1 (YPP1) from Saccharomyces cerevisiae (strain ATCC 204508 / S288c) (Baker's yeast).